Consider the following 348-residue polypeptide: Beta-hexosaminidase (348 aa).

Substrate is bound by residues D62, R70, R134, and 164 to 165 (KH). H177 (proton donor/acceptor) is an active-site residue. Catalysis depends on D249, which acts as the Nucleophile.

The protein belongs to the glycosyl hydrolase 3 family. NagZ subfamily.

Its subcellular location is the cytoplasm. It catalyses the reaction Hydrolysis of terminal non-reducing N-acetyl-D-hexosamine residues in N-acetyl-beta-D-hexosaminides.. It participates in cell wall biogenesis; peptidoglycan recycling. Functionally, plays a role in peptidoglycan recycling by cleaving the terminal beta-1,4-linked N-acetylglucosamine (GlcNAc) from peptide-linked peptidoglycan fragments, giving rise to free GlcNAc, anhydro-N-acetylmuramic acid and anhydro-N-acetylmuramic acid-linked peptides. This chain is Beta-hexosaminidase, found in Histophilus somni (strain 2336) (Haemophilus somnus).